The following is a 674-amino-acid chain: Probable L-type lectin-domain containing receptor kinase II.1 (674 aa).

An N-terminal signal peptide occupies residues 1-24 (MAGVLGSVVFWLIIGIHVTFLVFA). At 25 to 301 (QEGDHFVYYD…PSPKRFPLKE (277 aa)) the chain is on the extracellular side. The legume-lectin like stretch occupies residues 28 to 274 (DHFVYYDFRN…NQYILGWSFK (247 aa)). N-linked (GlcNAc...) asparagine glycans are attached at residues Asn57, Asn117, Asn133, Asn185, Asn210, and Asn242. The chain crosses the membrane as a helical span at residues 302–322 (VLGATISTIAFLTLGGIVYLY). Residues 323-674 (KKKKYAEVLE…EDVTVLFGGR (352 aa)) lie on the Cytoplasmic side of the membrane. Positions 355–633 (FRENQLLGAG…LEGNVSVPAI (279 aa)) constitute a Protein kinase domain. ATP is bound by residues 361 to 369 (LGAGGFGKV) and Lys383. Asp480 functions as the Proton acceptor in the catalytic mechanism.

It in the C-terminal section; belongs to the protein kinase superfamily. Ser/Thr protein kinase family. This sequence in the N-terminal section; belongs to the leguminous lectin family.

Its subcellular location is the cell membrane. The catalysed reaction is L-seryl-[protein] + ATP = O-phospho-L-seryl-[protein] + ADP + H(+). It carries out the reaction L-threonyl-[protein] + ATP = O-phospho-L-threonyl-[protein] + ADP + H(+). The protein is Probable L-type lectin-domain containing receptor kinase II.1 (LECRK21) of Arabidopsis thaliana (Mouse-ear cress).